A 338-amino-acid polypeptide reads, in one-letter code: Ribosomal RNA small subunit methyltransferase C (338 aa).

The protein belongs to the methyltransferase superfamily. RsmC family. Monomer.

It is found in the cytoplasm. The catalysed reaction is guanosine(1207) in 16S rRNA + S-adenosyl-L-methionine = N(2)-methylguanosine(1207) in 16S rRNA + S-adenosyl-L-homocysteine + H(+). In terms of biological role, specifically methylates the guanine in position 1207 of 16S rRNA in the 30S particle. The chain is Ribosomal RNA small subunit methyltransferase C from Photorhabdus laumondii subsp. laumondii (strain DSM 15139 / CIP 105565 / TT01) (Photorhabdus luminescens subsp. laumondii).